The primary structure comprises 288 residues: Phenazine biosynthesis-like domain-containing protein (288 aa).

Residue Glu-46 is part of the active site.

It belongs to the PhzF family. In terms of assembly, interacts with UNRIP/MAWD.

This Pongo abelii (Sumatran orangutan) protein is Phenazine biosynthesis-like domain-containing protein (PBLD).